A 576-amino-acid polypeptide reads, in one-letter code: Nuclear/nucleolar GTPase 2 (576 aa).

Disordered stretches follow at residues 1–61 (MVKK…SNEY) and 166–186 (QDAF…EEED). Residues 16–34 (HSLDANRADGKKKTTETRS) are compositionally biased toward basic and acidic residues. Over residues 42–52 (KMYKTRPKRNA) the composition is skewed to basic residues. Residues 206–367 (WGELYKVIDS…LIDCPGVVYQ (162 aa)) enclose the CP-type G domain. Residues 224–228 (DARDP) carry the DARXP motif motif. The tract at residues 254–257 (NKCD) is G4. Position 254–257 (254–257 (NKCD)) interacts with GTP. Residues 283–285 (SVN) form a G5 region. Positions 316-323 (GYPNVGKS) are G1. Position 319-324 (319-324 (NVGKSS)) interacts with GTP. Residues 342 to 346 (GETKV) form a G2 region. The segment at 360–363 (DCPG) is G3. A GTP-binding site is contributed by glycine 363. Residues 502 to 576 (TQQQKDVPVQ…DEEDESDSAE (75 aa)) are disordered. Residues 509–530 (PVQRDFYDEKDLKDDKKAKEST) are compositionally biased toward basic and acidic residues. Residues 531-576 (ETDAENGTDAEEDEDAVSEDGVESDSDADEDAVSENDEEDESDSAE) show a composition bias toward acidic residues.

The protein belongs to the TRAFAC class YlqF/YawG GTPase family. RsgA subfamily. As to quaternary structure, interacts with the 60S ribosomal proteins RPL10AA, RPL10AB and RPL10AC. In terms of tissue distribution, ubiquitous, with higher levels in meristematic regions.

It is found in the nucleus. Its subcellular location is the nucleolus. The GTPase activity is stimulated in the presence of the 60S ribosomal subunit. Its function is as follows. GTPase involved in pre-60S ribosomal subunit maturation. This is Nuclear/nucleolar GTPase 2 from Arabidopsis thaliana (Mouse-ear cress).